The primary structure comprises 331 residues: Type 2 lactosamine alpha-2,3-sialyltransferase (331 aa).

The Cytoplasmic segment spans residues 1 to 4 (MKGY). A helical; Signal-anchor for type II membrane protein membrane pass occupies residues 5–25 (VVAIFLSSIFLYYVLYCILWG). Residues 26-331 (TNGYWFPNEE…KKMVINLTQN (306 aa)) are Lumenal-facing. Residues Asn-129, Asn-181, Asn-295, Asn-308, and Asn-327 are each glycosylated (N-linked (GlcNAc...) asparagine).

This sequence belongs to the glycosyltransferase 29 family.

The protein localises to the golgi apparatus membrane. The catalysed reaction is a neolactoside nLc4Cer(d18:1(4E)) + CMP-N-acetyl-beta-neuraminate = a neolactoside IV(3)-alpha-NeuAc-nLc4Cer(d18:1(4E)) + CMP + H(+). It carries out the reaction a beta-D-galactosyl-(1-&gt;4)-N-acetyl-beta-D-glucosaminyl derivative + CMP-N-acetyl-beta-neuraminate = an N-acetyl-alpha-neuraminyl-(2-&gt;3)-beta-D-galactosyl-(1-&gt;4)-N-acetyl-beta-D-glucosaminyl derivative + CMP + H(+). The enzyme catalyses a neolactoside nLc6Cer(d18:1(4E)) + CMP-N-acetyl-beta-neuraminate = a neolactoside VI(3)-alpha-NeuNAc-nLc6Cer(d18:1(4E)) + CMP + H(+). Its function is as follows. Transfers the sialyl residue from CMP-N-acetyl-beta-neuraminate to the terminal galactose residue on sugar chains of glycoproteins and glycolipids. It's alpha-2,3-sialyltransferase activity is specific toward type II glycan chains (Galbeta1-4GlcNAc) on glycoproteins and glycolipids such as neolactosides nLc4Cer and nLc6Cer, whose sialyl-products serve as precursors for the Lewis X antigen. Critically involved in the synthesis of functional selectin ligands needed for neutrophil recruitment during inflammation and lymphocyte homing to the lymph nodes. The protein is Type 2 lactosamine alpha-2,3-sialyltransferase (St3gal6) of Rattus norvegicus (Rat).